Here is a 506-residue protein sequence, read N- to C-terminus: Anaerobic nitric oxide reductase transcription regulator NorR (506 aa).

Position 57 is a 4-aspartylphosphate (Asp-57). Positions 187-416 constitute a Sigma-54 factor interaction domain; that stretch reads MIGLSPAMTQ…LEHAIHRAVV (230 aa). Residues 215–222 and 278–287 each bind ATP; these read GETGTGKE and ADNGTLFLDE. Positions 481-500 form a DNA-binding region, H-T-H motif; it reads WAASARALETDVANLHRLAK.

The protein operates within nitrogen metabolism; nitric oxide reduction. In terms of biological role, required for the expression of anaerobic nitric oxide (NO) reductase, acts as a transcriptional activator for at least the norVW operon. Activation also requires sigma-54. The chain is Anaerobic nitric oxide reductase transcription regulator NorR from Salmonella agona (strain SL483).